A 157-amino-acid chain; its full sequence is Peptide methionine sulfoxide reductase MsrA (157 aa).

The active site involves Cys10.

The protein belongs to the MsrA Met sulfoxide reductase family.

The enzyme catalyses L-methionyl-[protein] + [thioredoxin]-disulfide + H2O = L-methionyl-(S)-S-oxide-[protein] + [thioredoxin]-dithiol. It carries out the reaction [thioredoxin]-disulfide + L-methionine + H2O = L-methionine (S)-S-oxide + [thioredoxin]-dithiol. Functionally, has an important function as a repair enzyme for proteins that have been inactivated by oxidation. Catalyzes the reversible oxidation-reduction of methionine sulfoxide in proteins to methionine. The sequence is that of Peptide methionine sulfoxide reductase MsrA from Clostridium botulinum (strain Kyoto / Type A2).